The sequence spans 446 residues: MRVVKVKKTVVIIGGGAAGMSAASRVKRLKPEWDVKVFEATEWVSHAPCGIPYVVEGISPTEKLMHYPPEVFIKKRGIDLHLNAEVIEVDTGYVRVREKDGEKSYEWDYLVFANGASPQVPAIEGVDLKGVFTADLPPDAVAIREYMEKNRVEDVVIVGGGYIGLEMAEAFVAQGKRVTMIVRGERILRRSFDKEVTDIIEEKLKQHVNLRLQEIVLRIEGKDRVEKVVTDAGEYRADLVILATGIKPNIELARQLGVRIGETGAIWTNEKMQTSVENVYAAGDVAETKHVITGRRVWVPLAPPGNKMGYVAGSNIAGKEIHFPGVLGTTVTKFLDVEIGKTGLTETEALKEGYDIRTAFIKASTRPHYYPGGKEIWLKGVVDNETNRLLGVQAVGAEILPRIDAAAAMLMANFTTKDAFFTDLAYAPPFAPVWDPLVVLARVLKF.

Residue 17-18 coordinates FAD; the sequence is AA. Residue Arg28 coordinates CoA. FAD is bound by residues 39 to 40 and 46 to 48; these read EA and HAP. CoA contacts are provided by residues 45 to 49, 66 to 67, and Arg76; these read SHAPC and HY. The active-site Redox-active is Cys49. FAD-binding residues include Val86, Asp284, and Ala302. CoA-binding residues include Asn306 and Lys362. Tyr426 lines the FAD pocket. Trp434 and Arg442 together coordinate CoA.

It belongs to the class-III pyridine nucleotide-disulfide oxidoreductase family. FAD serves as cofactor.

The catalysed reaction is hydrogen sulfide + NADP(+) = sulfur + NADPH. The enzyme catalyses hydrogen sulfide + NAD(+) = sulfur + NADH. Functionally, catalyzes the CoA-dependent reduction of elemental sulfur (S(0)) to produce hydrogen sulfide. This chain is NAD(P)H sulfur oxidoreductase (CoA-dependent), found in Pyrococcus abyssi (strain GE5 / Orsay).